A 400-amino-acid polypeptide reads, in one-letter code: MSNKLVLVLNCGSSSLKFAIINPVNGEKHLFGQAECLNLPNAQIKWNLNGIQYDTELSSGSTHDEALNFIEKNIYNQQPELLSQLTAIGHRIVHGRDYFTQSVIINDEVIKKIQGSIPFAPLHNPANLIGIYKAKKFFPKLASKNVAVFDTAFHQTMPEQSYLYALPYDLYQKNGIRRYGAHGISHYYVTHEAAKLLNKPVEKINLITCHLGSGGSISAIYHGQCIDTSMGLTPLEGLVMGTRSGDIDPAIIFHMYDILGMSIQQIYTLLTKKSGILGLTGVTSDCRYIEDNYIDKEDARRTINVYCHRLAKYIGAYSTLMDEVLDAVIFTGGIGENAAIVRQLTLSKLTLLGFQIDQNRNFAARFGTSGKITTDNSRPALVIPTNEELVIAQDTARLTA.

Residue N10 coordinates Mg(2+). K17 provides a ligand contact to ATP. R91 lines the substrate pocket. D150 acts as the Proton donor/acceptor in catalysis. Residues 210 to 214 (HLGSG), 285 to 287 (DCR), and 333 to 337 (GIGEN) each bind ATP. E387 provides a ligand contact to Mg(2+).

This sequence belongs to the acetokinase family. As to quaternary structure, homodimer. Mg(2+) is required as a cofactor. Requires Mn(2+) as cofactor.

The protein resides in the cytoplasm. The catalysed reaction is acetate + ATP = acetyl phosphate + ADP. It functions in the pathway metabolic intermediate biosynthesis; acetyl-CoA biosynthesis; acetyl-CoA from acetate: step 1/2. Functionally, catalyzes the formation of acetyl phosphate from acetate and ATP. Can also catalyze the reverse reaction. The chain is Acetate kinase from Baumannia cicadellinicola subsp. Homalodisca coagulata.